A 227-amino-acid chain; its full sequence is Spore coat protein O (227 aa).

Residues 1-10 (MKMSNKKRNA) show a composition bias toward basic residues. Residues 1 to 157 (MKMSNKKRNA…PARKVKKPMS (157 aa)) form a disordered region. 3 stretches are compositionally biased toward basic and acidic residues: residues 35–60 (VIKR…KQQE), 85–100 (EARE…EQKA), and 108–147 (TVEH…EKAP).

It localises to the spore coat. Functionally, has an important morphogenetic role. Involved in the assembly of at least five coat proteins, including CotB, CotG, CotS, CotSA and CotW. Required for appearance of a morphologically normal outer coat. To a large degree, CotO and CotH act at a late stage of coat assembly from within the outer coat to direct maturation of this structure. The sequence is that of Spore coat protein O (cotO) from Bacillus subtilis (strain 168).